A 4473-amino-acid chain; its full sequence is DGHNLISLLEVLSGDSLPREKGRMRFHKLQNVQIALDYLRHRQVKLVNIRNDDIADGNPKLTLGLIWTIILHFQISDIQVSGQSEDMTAKEKLLLWSQRMVEGYQGLRCDNFTTSWRDGRLFNAIIHRHKPMLIDMNKVYRQTNLENLDQAFSVAERDLGVTRLLDPEDVDVPQPDEKSIITYVSSLYDAMPRVPGAQNGVRANELQLRWQEYRELVLLLLQWIRHHTAAFEERKFPSSFEEIEILWCQFLKFKETELPAKEADKSRSKGIYQSLEGAVQAGQLQIPPGFHPLDVEKEWGKLHVAILEREKQLRGEFERLECLQRIVSKLQMEAGLCEEQLNQADSLLQSDIRLLASGKVAQRAGEVERDLDKADGMIRLLFNDVQTLKDGRHPQGEQMYRRVYRLHERLVAIRTEYNLRLKAGVAAPVTQVTVQSTQRRPELEDSTLRYLQDLLAWVEENQRRIDSAEWGVDLPSVEAQLGSHRGMHQSIEEFRAKIERARNDESQLSPATRGAYRECLGRLDLQYAKLLNSSKARLRSLESLHGFVAAATKELMWLNEKEEEEVGFDWSDRNTNMAAKKESYSALMRELEMKEKKIKETQNTGDRLLREDHHARPTVESFQAALQTQWSWMLQLCCCIEAHLKENTAYFQFFSDVREAEEQLQKLQETMRREYSCDRSITVTRLEDLLQDAQDEREQLNEYKGHLSGLAKRAKAIVQLKPRNPAHPVRGHVPLMAVCDYKQVEVTVHKGDQCQLVGPAQPSHWKVLRGPSSEAAVPSVCFLVPPPNQEAQEAVARLEAQHQALVTLWHQLHVDMKSLLAWQNLSRDIQLIRSWSLVTFRTLKPEEQRQALRNLELHYQAFLRDSQDAGGFGPEDRLVAEREYGSCSRHYQQLLQSLEQGEQEESRCQRCISELKDIRLQLEACETRTVHRLRLPLDKEPARECAQRIAEQQKAQAEVEGLGKGVARLSAEAEKVLALPEPSPAAPTLRSELELTLGKLEQVRSLSAIYLEKLKTISLVIRSTQGAEEVLKAHEEQLKEAQAVPATLQELEATKASLKKLRAQAEAQQPVFDTLRDELRGAQEVGERLQQRHGERDVEVERWRERVNQLLERWQAVLAQIDVRQRELEQLGRQLRYYRESADPLSSWLQDAKRRQEQIQAVPIPNSQAAREQLRQEKALLEEIERHGEKVEECQKFAKQYINAIKDYELQLVTYKAQLEPVASPAKKPKVQSGSESVIQEYVDLRTRYSELTTLTSQYIKFISETLRRMEEEERLAEQQRAEERERLAEGEAALEKQRQLAEAHAQAKAQAELEAQELQRRMQEEVARREEAAVNAQQQKRSIQEELQHLRQSSEAEIQAKAQQVEAAERSRMRIEEEIRVVRLQLETTERQRGGAEGELQALRARAEEAEAQKRQAQEEAERLRRQVQDESQRKRQAEAELALRVKAQAEAAQEKQRALQALEELRLQAEEAERRLRQAQAERARQVQVALETAQRSAEVELQSKRASFAEKTAQLERTLQEEHVTVTQLREKAERRAQQQAEAERAREEAERELERWQLKANEALRLRLQAEEVAQQRSLAQADAEKQKEEAEREARRRGKAEEQAVRQRELAEQELEKQRQLAEGTAQQRLAAEQELIRLRAETEQGEQQRQLLEEELARLQREATAATHKRQELEAELAKVRAEMEVLLASKARAEEESRSTSEKSKQRLEAEADRFRELAEEAARLRALAEEAKRQRQLAEEDAARQRAEAERVLTEKLAAISEATRLKTEAEIALKEKEAENERLRRLAEDEAFQRRRLEEQAALHKADIEERLAQLRKASESELERQKGLVEDTLRQRRQVEEEILALKVSFEKAAAGKAELELELGRIRSSAEDTMRSKEQAEQEAARQRQLAAEEEQRRREAEERVQKSLAAEEEAARQRKAALEEVERLKAKVEEARRLRERAEQESARQLQLAQEAAQKRLQAEEKAHAFVVQQREEELQQTLQQEQSMLERLRGEAEAARRAAEEAEEAREQAEREAAQSRKQVEEAERLKQSAEEQAQARAQAQAAAEKLRKEAEQEAARRAQAEQAALKQKQAADAEMEKHKKFAEQTLRQKAQVEQELTTLRLQLEETDHQKSILDEELQRLKAEVTEAARQRSQVEEELFSVRVQMEELGKLKARIEAENRALILRDKDNTQRFLEEEAEKMKQVAEEAARLSVAAQEAARLRQLAEEDLAQQRALAEKMLKEKMQAVQEATRLKAEAELLQQQKELAQEQARRLQEDKEQMAQQLVEETQGFQRTLEVERQRQLEMSAEAERLKLRMAEMSRAQARAEEDAQRFRKQAEEIGEKLHRTELATQEKVTLVQTLEIQRQQSDHDAERLREAIAELEREKEKLKQEAKLLQLKSEEMQTVQQEQILQETQALQKSFLSEKDSLLQRERFIEQEKAKLEQLFQDEVAKAQQLREEQQRQQRQMEQEKQELVASMEEARRRQCEAEEAVRRKQEELQHLELQRQQQEKLLAEENQRLRERLQRLEEEHRAALAHSEEIAATQAAAAKALPNGRDALDGPSMEVEPEHAFEGLRQKVPALQLREAGILSAEELQRLEQGHTTVAELSQREDVRQYLQGRSSIAGLLLKPTDEKLSVYTALQRQLLSPGTALILLEAQAASGFLLDPVRNRRLTVNEPVKEGVVGPELHHKLLSAERAVTGYKDPYTGEQISLFQAMKKDLLVRDHAIRLLEAQIATGGIIDTVHSHRVPVDVAYQRGYFDEEMSRILADPGDDTKGFFDPNTHENLTYLQLLERCVEDPETGLHLLPLTDKAAKGGELVYTDTEARDVFEKATVSAPFGKFQGKTVTIWEIINSEYFTAEQRRDLLRQFRTGRITVEKIIKIVITVVEEQERKGQLCFEGLRALVPAAELLESGVISHELYQQLQRGERSVREVAEADSVRRALRGASVIAGVWLEEAGQKLSIYEALKKDLLQPDVAVALLEAQAGTGHIIDPATSARLTVDEAVRAGLVGPELHEKLLSAEKAVTGYRDPYSGQSVSLFQALKKGLIPREQGLRLLDAQLSTGGMVDPSKSHRVPLDVAYARGYLDKETNRALTSPRNDARVYLDPSSQEPATYSQLQQRCRADQLTGLSLLPVSEKAVRARQEEVYSELQARETLEKARVEVPVGGFKGRTMTVWELISSEYFTQEQRQELLRQFRTGKVTVEKVIRIVITIVEEVETQRQERLSFSGLRAPVPASELLAAKILSRAQFDQLKEGKTSVKDLSEVGSVRTLLQGSGCLAGVYLEDSKEKVTIYEAMRRGLLRPSTATLLLEAQAATGFLVDPVRNQRLYVHEAVKAGVVGPELHEKLLSAEKAVTGYKDPYSGTTISLFQAMKKGLVLREHAIRLLEAQIATGGIIDPVHSHRLPVDVAYQRGYFDEEMSRILADPSDDTKGFFDPNTHENLTYLQLLERCVEDPETGLRLLPLKGAEKTEVVETTQVYTEEETRRAFEETQIDIPGGGSHGGSSMSLWEVMQSDMIPEDQRARLMADFQAGRVTKERMIIIIIEIIEKTEIIRQQNLASYDYVRRRLTAEDLYEARIISLETYNLFREGTKSLREVLEMESAWRYLYGTGSVAGVYLPGSRQTLTIYQALKKGLLSAEVARLLLEAQAATGFLLDPVKGERLTVDEAVRKGLVGPELHDRLLSAERAVTGYRDPYTEQTISLFQAMKKELIPAEEALRLLDAQLATGGIVDPRLGFHLPLEVAYQRGYLNKDTHDQLSEPSEVRSYVDPSTDERLSYTQLLKRCRRDDGSGQMLLPLSDARRLTFRGLRKQITVEELVRSQVMDEATALQLQEGLTSIEEVTKTLQKFLEGTSCIAGVFVDATKERLSVYQAMKKGIIRPGTAFELLEAQAATGYVIDPIKGLKLTVEEAVRMGIVGPEFKDRLLSAERAVTGYKDPYSGKLISLFQAMKKGLILKDHGIRLLEAQIATGGIIDPEESHRLPVEVAYKRGLFDEEMNEILTDPSDDTKGFFDPNTEENLTYLQLMERCITDPQTGLRLLPLKEKKRERKTSSKSSVRKRRVVIVDPETSKEMSVYEAYRKGLIDHQTYLELSEQECEWEEITISSSDGVVKSMIIDRRSGRQYDIDDAITENLIDRSALDQYRAGTLSITEFADMLSGNAGGFRSRSSSVGSSSSYPISPAVSRTQLASWSDPTEETGPVAGILDTETLEKVSITEAMHRNLVDNITGQRLLEAQACTGGIIDPSTGERFPVTEAVNKGLVDKIMVDRINLAQKAFCGFEDPRTKTKMSAAQALKKGWLYYEAGQRFLEVQYLTGGLIEPDTPGRVPLDEALQRGTVDARTAQKLRDVSAYSKYLTCPKTKLKISYKDALDRSMVEEGTGLRLLEAAAQSSKGYYSPYSVSGSGSTTGSRTGSRTGSRAGSRRGSFDATGSGFSMTFSSSSYSSSGYGRRYASGPPASLGGPESAVA.

Calponin-homology (CH) domains are found at residues 1-74 (DGHN…LHFQ) and 87-192 (MTAK…DAMP). Residues 1–192 (DGHNLISLLE…YVSSLYDAMP (192 aa)) form an actin-binding region. Residues 1 to 1259 (DGHNLISLLE…SELTTLTSQY (1259 aa)) form a globular 1 region. A Spectrin 1 repeat occupies 449-508 (RYLQDLLAWVEENQRRIDSAEWGVDLPSVEAQLGSHRGMHQSIEEFRAKIERARNDESQL). At Ser-509 the chain carries Phosphoserine. Spectrin repeat units follow at residues 529–613 (KLLN…REDH) and 626–719 (LQTQ…AIVQ). Thr-604 carries the post-translational modification Phosphothreonine. Residues 730–787 (RGHVPLMAVCDYKQVEVTVHKGDQCQLVGPAQPSHWKVLRGPSSEAAVPSVCFLVPPP) enclose the SH3 domain. Ser-836 is modified (phosphoserine). The Spectrin 4 repeat unit spans residues 1104-1204 (RERVNQLLER…QKFAKQYINA (101 aa)). Position 1224 is a phosphoserine (Ser-1224). A coiled-coil region spans residues 1258–2548 (QYIKFISETL…EEIAATQAAA (1291 aa)). Residues 1260–2544 (IKFISETLRR…LAHSEEIAAT (1285 aa)) form a central fibrous rod domain region. Disordered stretches follow at residues 1274–1293 (ERLA…EGEA) and 1407–1434 (RAEE…DESQ). The residue at position 1510 (Ser-1510) is a Phosphoserine. At Lys-1514 the chain carries N6-acetyllysine. 5 disordered regions span residues 1529–1550 (VTQL…ERAR), 1582–1616 (SLAQ…RELA), 1881–1929 (AEDT…AARQ), 1950–1971 (LRER…AAQK), and 2003–2098 (ERLR…KHKK). Composition is skewed to basic and acidic residues over residues 1587-1616 (DAEK…RELA), 1881-1897 (AEDT…EAAR), and 1905-1917 (EEQR…ERVQ). Positions 1959-1968 (ARQLQLAQEA) are enriched in low complexity. Residues 2003–2047 (ERLRGEAEAARRAAEEAEEAREQAEREAAQSRKQVEEAERLKQSA) are compositionally biased toward basic and acidic residues. Over residues 2048–2061 (EEQAQARAQAQAAA) the composition is skewed to low complexity. Over residues 2062 to 2077 (EKLRKEAEQEAARRAQ) the composition is skewed to basic and acidic residues. Ser-2420 carries the phosphoserine modification. Lys-2425 carries the N6-acetyllysine modification. The segment at 2457 to 2476 (REEQQRQQRQMEQEKQELVA) is disordered. Residues 2545-4473 (QAAAAKALPN…SLGGPESAVA (1929 aa)) are globular 2. 2 positions are modified to phosphoserine: Ser-2563 and Ser-2591. Plectin repeat units follow at residues 2615–2652 (RQYL…PGTA), 2653–2690 (LILL…PELH), 2691–2728 (HKLL…RDHA), 2729–2766 (IRLL…EEMS), and 2770–2804 (ADPG…PETG). Thr-2675 is subject to Phosphothreonine. At Tyr-2822 the chain carries Phosphotyrosine. An N6-acetyllysine mark is found at Lys-2842 and Lys-2880. Plectin repeat units lie at residues 2905 to 2942 (ALVP…ADSV), 2943 to 2980 (RRAL…PDVA), 2981 to 3018 (VALL…PELH), 3019 to 3056 (EKLL…REQG), and 3057 to 3094 (LRLL…KETN). At Tyr-3151 the chain carries Phosphotyrosine. Lys-3209 is modified (N6-acetyllysine). 5 Plectin repeats span residues 3274–3311 (RTLL…PSTA), 3312–3349 (TLLL…PELH), 3350–3387 (EKLL…REHA), 3388–3425 (IRLL…EEMS), and 3429–3463 (ADPS…PETG). Thr-3574 bears the Phosphothreonine mark. A Phosphotyrosine modification is found at Tyr-3579. Plectin repeat units lie at residues 3609–3646 (WRYL…AEVA), 3647–3684 (RLLL…PELH), 3685–3722 (DRLL…AEEA), 3723–3760 (LRLL…KDTH), 3764–3797 (SEPS…DGSG), and 3800–3834 (LLPL…EATA). Residue Thr-3819 is modified to Phosphothreonine. Ser-3843 bears the Phosphoserine mark. Plectin repeat units lie at residues 3852 to 3889 (QKFL…PGTA), 3890 to 3927 (FELL…PEFK), 3928 to 3965 (DRLL…KDHG), 3966 to 4003 (IRLL…EEMN), 4007 to 4041 (TDPS…PQTG), and 4043 to 4094 (RLLP…HQTY). Positions 4039–4089 (QTGLRLLPLKEKKRERKTSSKSSVRKRRVVIVDPETSKEMSVYEAYRKGLI) are binding to intermediate filaments. 8 positions are modified to phosphoserine: Ser-4171, Ser-4173, Ser-4174, Ser-4175, Ser-4178, Ser-4179, Ser-4180, and Ser-4181. The residue at position 4182 (Tyr-4182) is a Phosphotyrosine. Ser-4185, Ser-4189, and Ser-4195 each carry phosphoserine. 5 Plectin repeats span residues 4197–4234 (SDPT…NITG), 4235–4272 (QRLL…KIMV), 4273–4310 (DRIN…YEAG), 4311–4348 (QRFL…ARTA), and 4349–4386 (QKLR…EGTG). Position 4200 is a phosphothreonine (Thr-4200). Residue Thr-4328 is modified to Phosphothreonine; by CDK1. A phosphoserine mark is found at Ser-4396 and Ser-4402. Positions 4400 to 4460 (YYSPYSVSGS…SGYGRRYASG (61 aa)) are enriched in low complexity. Residues 4400-4473 (YYSPYSVSGS…SLGGPESAVA (74 aa)) are disordered. Residue Tyr-4404 is modified to Phosphotyrosine. A phosphoserine mark is found at Ser-4405, Ser-4407, and Ser-4411. Position 4412 is a phosphothreonine (Thr-4412). Residues 4414–4429 (GSRTGSRTGSRAGSRR) are 4 X 4 AA tandem repeats of G-S-R-X. Ser-4415 is subject to Phosphoserine. Omega-N-methylarginine is present on residues Arg-4416 and Arg-4429. Phosphoserine occurs at positions 4431 and 4464.

The protein belongs to the plakin or cytolinker family. As to quaternary structure, homodimer or homotetramer. Interacts (via actin-binding domain) with SYNE3. Interacts (via calponin-homology (CH) 1 domain) with VIM (via rod region). Interacts (via N-terminus) with DST isoform 2 (via N-terminus). Interacts with FER. Interacts with TOR1A. Interacts with ANK3. Identified in complexes that contain VIM, EZR, AHNAK, BFSP1, BFSP2, ANK2, PLEC, PRX and spectrin. Phosphorylated by CDK1; regulates dissociation from intermediate filaments during mitosis.

It is found in the cytoplasm. Its subcellular location is the cytoskeleton. The protein resides in the cell junction. It localises to the hemidesmosome. The protein localises to the cell projection. It is found in the podosome. Its function is as follows. Interlinks intermediate filaments with microtubules and microfilaments and anchors intermediate filaments to desmosomes or hemidesmosomes. May be involved not only in the cross-linking and stabilization of cytoskeletal intermediate filaments network, but also in the regulation of their dynamics. The protein is Plectin (PLEC) of Cricetulus griseus (Chinese hamster).